The sequence spans 359 residues: Membrane-bound lytic murein transglycosylase C (359 aa).

Positions 1 to 16 (MKKYLALALIAPLLIS) are cleaved as a signal peptide. The N-palmitoyl cysteine moiety is linked to residue C17. The S-diacylglycerol cysteine moiety is linked to residue C17.

It belongs to the transglycosylase Slt family.

Its subcellular location is the cell outer membrane. It carries out the reaction Exolytic cleavage of the (1-&gt;4)-beta-glycosidic linkage between N-acetylmuramic acid (MurNAc) and N-acetylglucosamine (GlcNAc) residues in peptidoglycan, from either the reducing or the non-reducing ends of the peptidoglycan chains, with concomitant formation of a 1,6-anhydrobond in the MurNAc residue.. Functionally, murein-degrading enzyme. May play a role in recycling of muropeptides during cell elongation and/or cell division. In Shigella sonnei (strain Ss046), this protein is Membrane-bound lytic murein transglycosylase C.